A 265-amino-acid polypeptide reads, in one-letter code: Urease accessory protein UreH (265 aa).

The protein belongs to the UreD family. UreH, UreF and UreG form a complex that acts as a GTP-hydrolysis-dependent molecular chaperone, activating the urease apoprotein by helping to assemble the nickel containing metallocenter of UreC. The UreE protein probably delivers the nickel.

The protein resides in the cytoplasm. Required for maturation of urease via the functional incorporation of the urease nickel metallocenter. The chain is Urease accessory protein UreH from Helicobacter pylori (strain HPAG1).